A 422-amino-acid polypeptide reads, in one-letter code: Metallocarboxypeptidase A (422 aa).

The signal sequence occupies residues M1–A17. Positions A18 to P112 are cleaved as a propeptide — activation peptide. The Peptidase M14 domain maps to S119 to V419. Zn(2+)-binding residues include H179 and E182. Substrate contacts are provided by residues H179 to E182, R237, and N254 to R255. Cysteines 248 and 271 form a disulfide. A Zn(2+)-binding site is contributed by H309. S310 to Y311 serves as a coordination point for substrate. E385 functions as the Proton donor/acceptor in the catalytic mechanism.

The protein belongs to the peptidase M14 family. The cofactor is Zn(2+).

It is found in the secreted. In terms of biological role, extracellular metalloprotease that contributes to pathogenicity. The chain is Metallocarboxypeptidase A (MCPA) from Trichophyton rubrum (Athlete's foot fungus).